The chain runs to 262 residues: Encapsulin nanocompartment protein Rv1762c (262 aa).

It belongs to the UPF0145 family.

The protein localises to the encapsulin nanocompartment. Cargo protein of a type 1 encapsulin nanocompartment possibly involved in protection against oxidative stress. The sequence is that of Encapsulin nanocompartment protein Rv1762c from Mycobacterium tuberculosis (strain ATCC 25618 / H37Rv).